Here is a 621-residue protein sequence, read N- to C-terminus: MNGATPSSAAAPAPVPDWRQFCELHAQVAAVDFAHKFCRFLRDNPTYDTPDAGTSFSRHFAANFLAVFSEEVRRVLGSAADTMEPEPAVTSVTSALKTATYGHSRSSEDVSAHAATKARVRKGFSLRNMSLCVVDGVRDLWHRRSSPEPDGGATPKAAEPASEPRDKWTRRLRLARTLAAKVELVDIQREGALRFMVADDAASGPGGTAQWQKCRLLLRRAVAGERFRLEFFVPPKASRPKVSIPLSAIIEVRTTMPLEMPEKDNTFVLKVENGAEYILETIDSLQKHSWVADIQGCVDPGDSEEDTGLSCARGGCLASRVASCSCELLTDADMPRPPETTTAVGAVVTAPHGRARDTVGESLAHVPLETFLQTLESSGGVSENNNPGDEGAELDTDAEAELELSDYPWFHGTLSRVKAAQLVLAGGPRSHGLFVIRQSETRPGECVLTFNFQGKAKHLRLSLNGHGQCHVQHLWFQSVFDMLRHFHTHPIPLESGGSADITLRSYVRAQGPPPDPGPAPNTAAPVPACWTEPAGQHYFSSLATATCPPASPSNGAGASSSSGSSSSATSLPPRPAEGPLSAHSRSNSTEHLLDAASGATEEPTEATLGRARAVENQYSFY.

Position 47 is a phosphotyrosine (Tyr-47). Ser-130 carries the phosphoserine modification. The disordered stretch occupies residues 143-166 (RRSSPEPDGGATPKAAEPASEPRD). The region spanning 186–299 (DIQREGALRF…WVADIQGCVD (114 aa)) is the PH domain. Residue Ser-303 is modified to Phosphoserine. Residues 409–507 (WFHGTLSRVK…SADITLRSYV (99 aa)) enclose the SH2 domain. 2 disordered regions span residues 507–528 (VRAQ…PVPA) and 549–611 (PASP…LGRA). Residues 552–571 (PSNGAGASSSSGSSSSATSL) are compositionally biased toward low complexity. Ser-597 carries the phosphoserine modification. Tyr-618 bears the Phosphotyrosine mark.

This sequence belongs to the SH2B adapter family. Homodimer. Interacts with KIT/c-KIT, SHC1, EPOR, PDGFR, VAV1 and VAV3. Interacts (via N-terminal region) with SHC1. Interacts (via the phosphorylated C-terminus) with GRB2. Interacts (via its SH2 domain) with EPOR, INSR and KIT. Interacts with GRB2 after B-cell antigen receptor stimulation. Interacts (via PH domain) with VAV3. Interacts with NTRK1, NTRK2 and NTRK3 (phosphorylated); after stimulation of the receptor by its extracellular ligand and subsequent autophosphorylation of the receptor. Binds INSR, GRB2, ASB6 and CAP. Insulin stimulation leads to dissociation of CAP. Binds CBS only when SH2B2/APS has become phosphorylated. INSR binding does not depend on the phosphorylation of SH2B2/APS. Post-translationally, tyrosine phosphorylated by JAK2, KIT and other kinases activated by B-cell receptor in response to stimulation with cytokines, IL3, IL5, PDGF, IGF1, IGF2, CSF2/GM-CSF and cross-linking of the B-cell receptor complex. Strongly expressed in brain; also expressed in spleen, kidney and skeletal muscle, and at low levels in small intestine and bone marrow. Strongly expressed in B-cell lines, but not T-cell lines. Also expressed in myeloid and fibroblast cell lines.

The protein resides in the cytoplasm. The protein localises to the cell membrane. In terms of biological role, adapter protein for several members of the tyrosine kinase receptor family. Involved in multiple signaling pathways. May be involved in coupling from immunoreceptor to Ras signaling. Acts as a negative regulator of cytokine signaling in collaboration with CBL. Binds to EPOR and suppresses EPO-induced STAT5 activation, possibly through a masking effect on STAT5 docking sites in EPOR. Suppresses PDGF-induced mitogenesis. May induce cytoskeletal reorganization via interaction with VAV3. The polypeptide is SH2B adapter protein 2 (Sh2b2) (Mus musculus (Mouse)).